The following is a 311-amino-acid chain: Systemic RNA interference defective protein 2 (311 aa).

The N-terminal stretch at 1–20 is a signal peptide; the sequence is MPRFVYFCFALIALLPISWT. Residues 21–188 lie on the Extracellular side of the membrane; sequence MDGILITDVE…EETKTVVNKN (168 aa). A helical membrane pass occupies residues 189–209; that stretch reads GGAVAVAVIEGIALIAILAFL. Over 210–311 the chain is Cytoplasmic; the sequence is GYRTMVNHKL…NDPFATLESW (102 aa). Residues 287-301 show a composition bias toward polar residues; the sequence is NSSAAQPSTTSNGQF. The interval 287-311 is disordered; the sequence is NSSAAQPSTTSNGQFNDPFATLESW.

Expressed in the intestinal lumen. Also present, at lower levels, in the excretory duct cells.

The protein localises to the apical cell membrane. The protein resides in the cytoplasm. Functionally, plays a role in RNA-mediated gene silencing by mediating endocytic uptake of double-stranded RNA (dsRNA) ingested from the environment into intestinal cells from the intestinal lumen. Selective for dsRNAs of at least 50 bp. Required for avoidance behavior induced by small RNAs derived from pathogenic bacteria such as P.aeruginosa. This Caenorhabditis elegans protein is Systemic RNA interference defective protein 2.